The following is a 248-amino-acid chain: ATP synthase subunit a, chloroplastic (248 aa).

Transmembrane regions (helical) follow at residues 37 to 57 (AQVL…AFVT), 96 to 116 (VPFI…GALF), 135 to 155 (INTT…AGLH), 200 to 220 (LVVA…MMFL), and 221 to 241 (GLFT…AYIG).

It belongs to the ATPase A chain family. In terms of assembly, F-type ATPases have 2 components, CF(1) - the catalytic core - and CF(0) - the membrane proton channel. CF(1) has five subunits: alpha(3), beta(3), gamma(1), delta(1), epsilon(1). CF(0) has four main subunits: a, b, b' and c.

It is found in the plastid. Its subcellular location is the chloroplast thylakoid membrane. Functionally, key component of the proton channel; it plays a direct role in the translocation of protons across the membrane. The polypeptide is ATP synthase subunit a, chloroplastic (Psilotum nudum (Whisk fern)).